The chain runs to 391 residues: MAVKKRSIFEEVGQGAKAPVPQGGSIDRGQGGARRGIRLWLMALFVLVMAMIVVGGLTRLTDSGLSITEWRPVTGAVPPLNEAEWTAEFEKYRQSPQYRLMNAGMSMAEFQRIYWWEWGHRQLGRVIGLVWAVGFLGFLVARKMPRGWWPRLLALGVLGGIQGGIGWWMVASGLEGDRVAVESTRLAVHLSLAFIILGMIAWQALLLGRTEAELFQARRQREGRLYGMTTVLIVVAFLQVVLGALVAGIDAGRGFPTWPDMNGTFLPADMLYVPGVETDWRNPAWWLGLLQNPGFVQFLHRMAGYALVALGLVFWIFGRRTKHRATRGAFDLLALALLAQVALGVGTVLSAAEWQVAIAHQVGAVVIWVLILHARHLAHYPRVGSIRKGTL.

8 helical membrane-spanning segments follow: residues 37-57 (IRLW…VGGL), 121-141 (RQLG…FLVA), 152-172 (LLAL…MVAS), 186-206 (LAVH…QALL), 229-249 (TTVL…VAGI), 298-318 (FLHR…WIFG), 332-352 (LLAL…LSAA), and 354-374 (WQVA…ILHA). H300 serves as a coordination point for heme. A heme-binding site is contributed by H360.

The protein belongs to the COX15/CtaA family. Type 2 subfamily. Interacts with CtaB. The cofactor is heme b.

It is found in the cell membrane. It catalyses the reaction Fe(II)-heme o + 2 A + H2O = Fe(II)-heme a + 2 AH2. The protein operates within porphyrin-containing compound metabolism; heme A biosynthesis; heme A from heme O: step 1/1. Its function is as follows. Catalyzes the conversion of heme O to heme A by two successive hydroxylations of the methyl group at C8. The first hydroxylation forms heme I, the second hydroxylation results in an unstable dihydroxymethyl group, which spontaneously dehydrates, resulting in the formyl group of heme A. This Cereibacter sphaeroides (strain ATCC 17025 / ATH 2.4.3) (Rhodobacter sphaeroides) protein is Heme A synthase.